Here is a 238-residue protein sequence, read N- to C-terminus: Uridylate kinase (238 aa).

12-15 lines the ATP pocket; that stretch reads KLSG. UMP is bound at residue Gly54. Residues Gly55 and Arg59 each coordinate ATP. UMP-binding positions include Asp74 and 135–142; that span reads TGNPYFTT. The ATP site is built by Thr162, Asn163, Tyr168, and Asp171.

This sequence belongs to the UMP kinase family. As to quaternary structure, homohexamer.

It localises to the cytoplasm. The catalysed reaction is UMP + ATP = UDP + ADP. It participates in pyrimidine metabolism; CTP biosynthesis via de novo pathway; UDP from UMP (UMPK route): step 1/1. Inhibited by UTP. Its function is as follows. Catalyzes the reversible phosphorylation of UMP to UDP. This Nitrobacter hamburgensis (strain DSM 10229 / NCIMB 13809 / X14) protein is Uridylate kinase.